An 855-amino-acid polypeptide reads, in one-letter code: Cell surface glycoprotein (855 aa).

Positions 1-22 are cleaved as a signal peptide; that stretch reads MTANKQVRAVLLAALMVFSVFA. Residues asparagine 78, asparagine 83, asparagine 108, asparagine 167, asparagine 174, asparagine 187, asparagine 203, asparagine 227, asparagine 230, asparagine 313, asparagine 363, asparagine 441, asparagine 548, asparagine 588, asparagine 608, asparagine 620, asparagine 642, asparagine 656, and asparagine 754 are each glycosylated (N-linked (GlcNAc...) asparagine). A compositionally biased stretch (low complexity) spans 782–802; that stretch reads ETTTAAETTTTEESTETTTTE. The disordered stretch occupies residues 782–831; it reads ETTTAAETTTTEESTETTTTEESTEEPTETATATEEPTEEATEETTESST. A compositionally biased stretch (acidic residues) spans 817 to 827; it reads EPTEEATEETT. The chain crosses the membrane as a helical span at residues 831 to 851; that stretch reads TPGFGVVVALVALVAAALLAV. The short motif at 832–834 is the PGF sorting signal element; it reads PGF.

It belongs to the halobacterial S-layer protein family. Glycosylated. Post-translationally, cleaved by the archaeosortase ArtA at the C-terminus, with removal of a short hydrophobic segment. In terms of processing, lipidation.

The protein resides in the secreted. It localises to the cell wall. It is found in the S-layer. Its subcellular location is the cell membrane. S-layer protein. The S-layer is a paracrystalline mono-layered assembly of proteins which coats the surface of the cell. This chain is Cell surface glycoprotein, found in Haloferax gibbonsii.